A 463-amino-acid polypeptide reads, in one-letter code: Glutamyl-tRNA reductase (463 aa).

Substrate is bound by residues 49–52, Ser109, 114–116, and Gln120; these read TCNR and EQQ. Cys50 functions as the Nucleophile in the catalytic mechanism. NADP(+) is bound at residue 196 to 201; sequence GAGAMS.

It belongs to the glutamyl-tRNA reductase family. As to quaternary structure, homodimer.

It carries out the reaction (S)-4-amino-5-oxopentanoate + tRNA(Glu) + NADP(+) = L-glutamyl-tRNA(Glu) + NADPH + H(+). It functions in the pathway porphyrin-containing compound metabolism; protoporphyrin-IX biosynthesis; 5-aminolevulinate from L-glutamyl-tRNA(Glu): step 1/2. In terms of biological role, catalyzes the NADPH-dependent reduction of glutamyl-tRNA(Glu) to glutamate 1-semialdehyde (GSA). In Corynebacterium glutamicum (strain R), this protein is Glutamyl-tRNA reductase.